Here is a 330-residue protein sequence, read N- to C-terminus: D-lactate dehydrogenase (330 aa).

NAD(+)-binding positions include R155–I156, D175, M206–P207, N212, M233–R235, and D259. The active site involves R235. The active site involves E264. The Proton donor role is filled by H296.

This sequence belongs to the D-isomer specific 2-hydroxyacid dehydrogenase family.

It carries out the reaction (R)-lactate + NAD(+) = pyruvate + NADH + H(+). The polypeptide is D-lactate dehydrogenase (ldhD) (Streptococcus pyogenes serotype M1).